The following is a 550-amino-acid chain: MTPADLAELLRGTAAKVLDERGLDVSVLPETLTVERPRNPEHGDYATNVAMQVAKKVGTNPRELAGWLAEALTAAEGIDSADIAGPGFLNIRLAADAQGAIVAKILDEGAAFGSGHTLDGKRINLEFVSANPTGPIHLGGTRWAAVGDALGRILSTQGAAVTREYYFNDHGAQIDRFSRSLIAAAKGEPAPEDGYAGAYIADIAAQVQSQRPDVLELPAGEQQEVFRAIGVDLMFAHIKRTLHEFGVDFDVYFHENSLFESGAVEKAVETLKDSGNLFQEDGAWWLKSTDFGDDKDRVVIKSDGNAAYIAGDIAYFQDKRSRGFDLCIYMLGADHHGYIGRLKAAAAAFGDDPDTVEVLIGQMVNLVRDGVAVKMSKRAGTVITLDDLVEAIGVDASRYAMIRSSVDSSIDIDLELWTSTGNENPVYYVQYAHARLSAIARNAADLGIAVADPDFSLLVSEQEGDLIRTLGEYPRVVTSAANLREPHRIARYLEELAGAYHRFYGACRILPQGDEEVGPLHIARLALCDASRQVLSNGLALLGVSAPEQM.

Residues alanine 130–glycine 140 carry the 'HIGH' region motif.

The protein belongs to the class-I aminoacyl-tRNA synthetase family. In terms of assembly, monomer.

The protein resides in the cytoplasm. The catalysed reaction is tRNA(Arg) + L-arginine + ATP = L-arginyl-tRNA(Arg) + AMP + diphosphate. This is Arginine--tRNA ligase from Rhodococcus jostii (strain RHA1).